The sequence spans 193 residues: Xanthine phosphoribosyltransferase (193 aa).

Residues Leu-20 and Asn-27 each contribute to the xanthine site. 127–131 contacts 5-phospho-alpha-D-ribose 1-diphosphate; that stretch reads AYGNA. Position 155 (Lys-155) interacts with xanthine.

The protein belongs to the purine/pyrimidine phosphoribosyltransferase family. Xpt subfamily. As to quaternary structure, homodimer.

It is found in the cytoplasm. The catalysed reaction is XMP + diphosphate = xanthine + 5-phospho-alpha-D-ribose 1-diphosphate. Its pathway is purine metabolism; XMP biosynthesis via salvage pathway; XMP from xanthine: step 1/1. In terms of biological role, converts the preformed base xanthine, a product of nucleic acid breakdown, to xanthosine 5'-monophosphate (XMP), so it can be reused for RNA or DNA synthesis. The protein is Xanthine phosphoribosyltransferase of Porphyromonas gingivalis (strain ATCC BAA-308 / W83).